The primary structure comprises 217 residues: Probable GTP-binding protein EngB (217 aa).

One can recognise an EngB-type G domain in the interval 33 to 217 (GPAEIAFAGR…RITIEQAVAR (185 aa)). Residues 41-48 (GRSNVGKS), 68-72 (GRTQE), 95-98 (DMPG), 162-165 (TKTD), and 196-198 (TSS) contribute to the GTP site. Ser48 and Thr70 together coordinate Mg(2+).

This sequence belongs to the TRAFAC class TrmE-Era-EngA-EngB-Septin-like GTPase superfamily. EngB GTPase family. The cofactor is Mg(2+).

Functionally, necessary for normal cell division and for the maintenance of normal septation. This chain is Probable GTP-binding protein EngB, found in Sinorhizobium fredii (strain NBRC 101917 / NGR234).